The chain runs to 567 residues: GNAYMRIYSTKTTRITANATVNAADTHVRRSANYKPSSWSFDHIQSLSSKYTGDDYVARANTLKDAVKTMIRKSGNSLRTLELVDELQRLGISYLFEEEISNLLETIYYNYYKFPENWNKINLNLKALGFRLLRQHGYHVPQEIFLNFKDKNQNLNSYLLNDVVEMLNLYEASYHSFEDESILDDARDITTKYLKESLEKIDGSIFSSVTHALEQPLHWRVPRVEAKWFIELYEKKNGMSPTLVELAKLDFDMVQAIHLEDLKHASRWWRDTSWDTKLTFARDLIVENFLWTIGFSYLPNFSRGRRTITKVAVMITTLDDVYDVFGTLGELEQFTDVINRWDIKAIEQLPDYMKICFLGLYKSINDITHETLANKGFLILPYLKKAWADLCKAYLVEAQWYHRGHIPTLNEYLDNACVSISGPVALMHVHFLTSVSSIEEIHQCIQRTENIVHYVSLIFRLADDLGTSLGEMERGDTLKSIQLHMHETGATEPEARSYIKLLINKTWKKLNKERATVNSESSQEFIDYATNLVRMAQFMYGEGDEDFGLDVIKSHVLSLLFTPIQGI.

A chloroplast-targeting transit peptide spans 1–24 (GNAYMRIYSTKTTRITANATVNAA). R282, D319, D323, R460, and D463 together coordinate (2E)-geranyl diphosphate. Residues D319 and D323 each coordinate Mg(2+). Positions 319–323 (DDVYD) match the DDXXD motif motif. Positions 463, 467, and 471 each coordinate Mg(2+).

This sequence belongs to the terpene synthase family. Tpsb subfamily. Mg(2+) serves as cofactor. In terms of tissue distribution, highly expressed in leaves and lower levels in inflorescences. Not detected in stems, stem epidermis, stem stele or roots.

Its subcellular location is the plastid. The protein resides in the chloroplast. It catalyses the reaction (2E)-geranyl diphosphate + H2O = (R)-linalool + diphosphate. Its pathway is secondary metabolite biosynthesis; terpenoid biosynthesis. Monoterpene synthase that catalyzes the formation of (3R)-linalool from geranyl diphosphate, but not from isopentenyl diphosphate, dimethylallyl diphosphate, chrysanthemyl diphosphate, farnesyl diphosphate, (+)-copalyl diphosphate or geranylgeranyl diphosphate. This is R-linalool synthase QH1, chloroplastic (QH1) from Artemisia annua (Sweet wormwood).